Here is a 320-residue protein sequence, read N- to C-terminus: Taste receptor type 2 member 109 (320 aa).

Residues 1-14 are Extracellular-facing; the sequence is MEHFLKSIFDISKN. Residues 15-35 form a helical membrane-spanning segment; the sequence is VLPIILFIELIIGIIGNGFMA. Residues 36–62 lie on the Cytoplasmic side of the membrane; it reads LVHCMDWVKRKKMSLVNQILTTLATSR. A helical membrane pass occupies residues 63-83; that stretch reads ICLLWFMLLGLLITLLDPDLA. The Extracellular portion of the chain corresponds to 84–94; the sequence is SARMMIQVASN. A helical membrane pass occupies residues 95–115; it reads LWIIANHMSIWLATCLTVFYF. Residues 116–135 are Cytoplasmic-facing; that stretch reads LKIANFSSSLFLYLKWRVEK. The helical transmembrane segment at 136-156 threads the bilayer; the sequence is VISVIFLVSLVLLFLNMLLMN. At 157–191 the chain is on the extracellular side; that stretch reads LENDMCIAEYHQINISYSFIYHYRADCERRVLRLH. N170 carries N-linked (GlcNAc...) asparagine glycosylation. Residues 192-212 form a helical membrane-spanning segment; the sequence is IIILSVPFVLSLPTFLLLIFS. The Cytoplasmic portion of the chain corresponds to 213–240; it reads LWTHHKKMQQHVQGRRDASTTAHFKALQ. Residues 241–261 traverse the membrane as a helical segment; sequence TVIAFLLLYCIFILSMLLQFW. The Extracellular segment spans residues 262–270; the sequence is KYELMKKPL. The helical transmembrane segment at 271 to 291 threads the bilayer; sequence FILFCHIVYGAFPSFHSYVLI. Over 292–320 the chain is Cytoplasmic; the sequence is LGDMKLRQASLSVLLWLKCRPNYIETLDL.

Belongs to the G-protein coupled receptor T2R family.

Its subcellular location is the membrane. Its function is as follows. Putative taste receptor which may play a role in the perception of bitterness. This chain is Taste receptor type 2 member 109, found in Rattus norvegicus (Rat).